A 637-amino-acid chain; its full sequence is Phosphomethylpyrimidine synthase (637 aa).

Substrate-binding positions include N242, M271, Y300, H336, 356–358, 397–400, and E436; these read SRG and DGLR. H440 contacts Zn(2+). Position 463 (Y463) interacts with substrate. Residue H504 participates in Zn(2+) binding. 3 residues coordinate [4Fe-4S] cluster: C584, C587, and C592.

The protein belongs to the ThiC family. In terms of assembly, homodimer. The cofactor is [4Fe-4S] cluster.

It carries out the reaction 5-amino-1-(5-phospho-beta-D-ribosyl)imidazole + S-adenosyl-L-methionine = 4-amino-2-methyl-5-(phosphooxymethyl)pyrimidine + CO + 5'-deoxyadenosine + formate + L-methionine + 3 H(+). It participates in cofactor biosynthesis; thiamine diphosphate biosynthesis. In terms of biological role, catalyzes the synthesis of the hydroxymethylpyrimidine phosphate (HMP-P) moiety of thiamine from aminoimidazole ribotide (AIR) in a radical S-adenosyl-L-methionine (SAM)-dependent reaction. The protein is Phosphomethylpyrimidine synthase of Bordetella avium (strain 197N).